Consider the following 256-residue polypeptide: Aspirochlorine biosynthesis protein F (256 aa).

N-linked (GlcNAc...) asparagine glycosylation occurs at Asn-19. 3 helical membrane-spanning segments follow: residues 21-41 (SITP…GPHF), 163-183 (LVWV…FFFT), and 214-234 (FGLG…ILAV).

The protein localises to the membrane. Its pathway is mycotoxin biosynthesis. Its function is as follows. Part of the gene cluster that mediates the biosynthesis of aspirochlorine (or antibiotic A30641), an unusual halogenated spiro compound with distinctive antifungal properties due to selective inhibition of protein biosynthesis, and which is also active against bacteria, viruses, and murine tumor cells. The non-ribosomal peptide synthetase (NRPS) aclP is responsible the formation of the diketopiperazine (DKP) core from the condensation of 2 phenylalanine residues. One Phe residue is tailored into chlorotyrosine by hydroxylation and chlorination, whereas the second Phe undergoes an unprecedented C-C bond cleavage to be converted into glycine. After formation of the DKP, sulfur is incorporated into the DKP by conjugation with glutathione by aclG, followed by its stepwise degradation to the thiol by aclI, aclJ and aclK, and the dithiol oxidation by aclT. In addition, oxygenases (aclB, aclC, aclL and aclO) and O-methyltransferases (aclM and aclU) act as tailoring enzymes to produce the intermediate dechloroaspirochlorine. Ultimately, chlorination of dechloroaspirochlorine by the halogenase aclH is the last step in the aspirochlorine pathway. This is Aspirochlorine biosynthesis protein F from Aspergillus oryzae (strain ATCC 42149 / RIB 40) (Yellow koji mold).